The sequence spans 42 residues: MSNSENTGRIPLWLVLTIIGLAAIALLALFFYGSYSGLGSSL.

A helical transmembrane segment spans residues 10–30 (IPLWLVLTIIGLAAIALLALF).

Belongs to the PsbJ family. PSII is composed of 1 copy each of membrane proteins PsbA, PsbB, PsbC, PsbD, PsbE, PsbF, PsbH, PsbI, PsbJ, PsbK, PsbL, PsbM, PsbT, PsbY, PsbZ, Psb30/Ycf12, at least 3 peripheral proteins of the oxygen-evolving complex and a large number of cofactors. It forms dimeric complexes.

The protein localises to the plastid. It is found in the chloroplast thylakoid membrane. This protein is a component of the reaction center of photosystem II. Its function is as follows. One of the components of the core complex of photosystem II (PSII). PSII is a light-driven water:plastoquinone oxidoreductase that uses light energy to abstract electrons from H(2)O, generating O(2) and a proton gradient subsequently used for ATP formation. It consists of a core antenna complex that captures photons, and an electron transfer chain that converts photonic excitation into a charge separation. This chain is Photosystem II reaction center protein J, found in Euglena gracilis.